A 957-amino-acid chain; its full sequence is Glycine dehydrogenase (decarboxylating) (957 aa).

Residue lysine 708 is modified to N6-(pyridoxal phosphate)lysine.

This sequence belongs to the GcvP family. In terms of assembly, the glycine cleavage system is composed of four proteins: P, T, L and H. Pyridoxal 5'-phosphate serves as cofactor.

The catalysed reaction is N(6)-[(R)-lipoyl]-L-lysyl-[glycine-cleavage complex H protein] + glycine + H(+) = N(6)-[(R)-S(8)-aminomethyldihydrolipoyl]-L-lysyl-[glycine-cleavage complex H protein] + CO2. In terms of biological role, the glycine cleavage system catalyzes the degradation of glycine. The P protein binds the alpha-amino group of glycine through its pyridoxal phosphate cofactor; CO(2) is released and the remaining methylamine moiety is then transferred to the lipoamide cofactor of the H protein. This is Glycine dehydrogenase (decarboxylating) from Salmonella typhimurium (strain LT2 / SGSC1412 / ATCC 700720).